Here is a 188-residue protein sequence, read N- to C-terminus: UPF0340 protein BH3766 (188 aa).

Belongs to the UPF0340 family.

This chain is UPF0340 protein BH3766, found in Halalkalibacterium halodurans (strain ATCC BAA-125 / DSM 18197 / FERM 7344 / JCM 9153 / C-125) (Bacillus halodurans).